A 1104-amino-acid polypeptide reads, in one-letter code: Transposon Ty4-P Gag-Pol polyprotein (1104 aa).

Residues 48-112 (VKQYQRNLNR…VEKIQLLETN (65 aa)) are a coiled coil. Positions 381 to 501 (QQQLKSSAKE…KTKMVLSRKY (121 aa)) are ty4 protease. D414 acts as the For protease activity; shared with dimeric partner in catalysis. The segment at 539 to 599 (AIKPTSSPGF…EPNEFWCQTC (61 aa)) is integrase-type zinc finger-like. Residues 619–786 (TDHEPGSSWC…LPLKAISRQP (168 aa)) form the Integrase catalytic domain. Mg(2+) contacts are provided by D630 and D695.

As to quaternary structure, the protease is a homodimer, whose active site consists of two apposed aspartic acid residues. Proteolytically processed into capsid protein (CA), Ty4 protease (PR), integrase (IN) and reverse transcriptase/ribonuclease H (RT) proteins. Initially, virus-like particles (VLPs) are composed of the structural unprocessed proteins Gag and Gag-Pol, and also contain the host initiator methionine tRNA (tRNA(i)-Met) which serves as a primer for minus-strand DNA synthesis, and a dimer of genomic Ty RNA. Processing of the polyproteins occurs within the particle and proceeds by an ordered pathway, called maturation. First, the protease (PR) is released by autocatalytic cleavage of the Gag-Pol polyprotein, and this cleavage is a prerequisite for subsequent processing at the remaining sites to release the mature structural and catalytic proteins. Maturation takes place prior to the RT reaction and is required to produce transposition-competent VLPs.

The protein localises to the cytoplasm. Its subcellular location is the nucleus. The enzyme catalyses DNA(n) + a 2'-deoxyribonucleoside 5'-triphosphate = DNA(n+1) + diphosphate. It catalyses the reaction Endonucleolytic cleavage to 5'-phosphomonoester.. Functionally, capsid protein (CA) is the structural component of the virus-like particle (VLP), forming the shell that encapsulates the retrotransposons dimeric RNA genome. In terms of biological role, the aspartyl protease (PR) mediates the proteolytic cleavages of the Gag and Gag-Pol polyproteins after assembly of the VLP. Reverse transcriptase/ribonuclease H (RT) is a multifunctional enzyme that catalyzes the conversion of the retro-elements RNA genome into dsDNA within the VLP. The enzyme displays a DNA polymerase activity that can copy either DNA or RNA templates, and a ribonuclease H (RNase H) activity that cleaves the RNA strand of RNA-DNA heteroduplexes during plus-strand synthesis and hydrolyzes RNA primers. The conversion leads to a linear dsDNA copy of the retrotransposon that includes long terminal repeats (LTRs) at both ends. Its function is as follows. Integrase (IN) targets the VLP to the nucleus, where a subparticle preintegration complex (PIC) containing at least integrase and the newly synthesized dsDNA copy of the retrotransposon must transit the nuclear membrane. Once in the nucleus, integrase performs the integration of the dsDNA into the host genome. This Saccharomyces cerevisiae (strain ATCC 204508 / S288c) (Baker's yeast) protein is Transposon Ty4-P Gag-Pol polyprotein (TY4B-P).